The chain runs to 358 residues: Nicotinate-nucleotide--dimethylbenzimidazole phosphoribosyltransferase (358 aa).

Residue E314 is the Proton acceptor of the active site.

Belongs to the CobT family.

It catalyses the reaction 5,6-dimethylbenzimidazole + nicotinate beta-D-ribonucleotide = alpha-ribazole 5'-phosphate + nicotinate + H(+). It functions in the pathway nucleoside biosynthesis; alpha-ribazole biosynthesis; alpha-ribazole from 5,6-dimethylbenzimidazole: step 1/2. Catalyzes the synthesis of alpha-ribazole-5'-phosphate from nicotinate mononucleotide (NAMN) and 5,6-dimethylbenzimidazole (DMB). This Mycobacterium marinum (strain ATCC BAA-535 / M) protein is Nicotinate-nucleotide--dimethylbenzimidazole phosphoribosyltransferase.